A 297-amino-acid polypeptide reads, in one-letter code: Aspartate carbamoyltransferase catalytic subunit (297 aa).

The carbamoyl phosphate site is built by R49 and T50. Position 77 (K77) interacts with L-aspartate. Carbamoyl phosphate-binding residues include R99, H129, and Q132. R162 and R215 together coordinate L-aspartate. Residues G256 and P257 each coordinate carbamoyl phosphate.

Belongs to the aspartate/ornithine carbamoyltransferase superfamily. ATCase family. Heterododecamer (2C3:3R2) of six catalytic PyrB chains organized as two trimers (C3), and six regulatory PyrI chains organized as three dimers (R2).

It catalyses the reaction carbamoyl phosphate + L-aspartate = N-carbamoyl-L-aspartate + phosphate + H(+). The protein operates within pyrimidine metabolism; UMP biosynthesis via de novo pathway; (S)-dihydroorotate from bicarbonate: step 2/3. Catalyzes the condensation of carbamoyl phosphate and aspartate to form carbamoyl aspartate and inorganic phosphate, the committed step in the de novo pyrimidine nucleotide biosynthesis pathway. The protein is Aspartate carbamoyltransferase catalytic subunit of Legionella pneumophila (strain Corby).